Consider the following 84-residue polypeptide: Magnetosome protein MamR (84 aa).

It belongs to the magnetosome MamR family.

Its subcellular location is the magnetosome. Its function is as follows. May play a role in controlling magnetite number and size. Coexpression of mamLQRBIEMO in a deletion of the 17 gene mamAB operon restores magnetosome vesicle formation but not magnetite biosynthesis. The chain is Magnetosome protein MamR from Magnetospirillum gryphiswaldense (strain DSM 6361 / JCM 21280 / NBRC 15271 / MSR-1).